Reading from the N-terminus, the 434-residue chain is Meiosis-specific kinetochore protein (434 aa).

2 disordered regions span residues Met-1–Thr-102 and Val-249–Lys-289. Residues Lys-46–Ser-62 are compositionally biased toward basic and acidic residues. Residues Leu-64 to Ser-76 are compositionally biased toward polar residues. Positions Ser-334–Pro-336 match the POLO box domain (PBD)-binding motif. The segment at Glu-391–Cys-394 is required for localization to kinetochores. The interval Gln-404 to Leu-424 is disordered.

In terms of assembly, interacts with CENPC. Interacts with PLK1; required for recruitment of PLK1 at kinetochores. In terms of tissue distribution, germ cell-specific. Expressed in both testis and ovary. Not expressed in other tissues.

It localises to the chromosome. Its subcellular location is the centromere. It is found in the kinetochore. In terms of biological role, key regulator of kinetochore function during meiosis I: required both for mono-orientation of kinetochores on sister chromosomes and protection of centromeric cohesin from separase-mediated cleavage. Acts by facilitating kinetochore mono-orientation during meiosis I, when kinetochores on sister chromosomes face the same direction and are thus captured and pulled by spindle fibers from the same pole. Also required to prevent cleavage of cohesin at centromeres during meiosis I, possibly by acting as a regulator of the shugoshin-dependent protection pathway. Acts in collaboration with PLK1: required for PLK1 enrichment to kinetochores. Not required during meiosis II or mitosis. This is Meiosis-specific kinetochore protein from Mus musculus (Mouse).